The following is an 86-amino-acid chain: UPF0457 protein BCE33L2265 (86 aa).

Belongs to the UPF0457 family.

This is UPF0457 protein BCE33L2265 from Bacillus cereus (strain ZK / E33L).